We begin with the raw amino-acid sequence, 43 residues long: Protein PsbN (43 aa).

A helical transmembrane segment spans residues 7-27 (IAIFISCLIVSFTGYALYTAF).

Belongs to the PsbN family.

It localises to the plastid. It is found in the chloroplast thylakoid membrane. Its function is as follows. May play a role in photosystem I and II biogenesis. This Psilotum nudum (Whisk fern) protein is Protein PsbN.